Consider the following 290-residue polypeptide: 33 kDa chaperonin (290 aa).

2 cysteine pairs are disulfide-bonded: Cys235–Cys237 and Cys268–Cys271.

Belongs to the HSP33 family. In terms of processing, under oxidizing conditions two disulfide bonds are formed involving the reactive cysteines. Under reducing conditions zinc is bound to the reactive cysteines and the protein is inactive.

It localises to the cytoplasm. Its function is as follows. Redox regulated molecular chaperone. Protects both thermally unfolding and oxidatively damaged proteins from irreversible aggregation. Plays an important role in the bacterial defense system toward oxidative stress. The chain is 33 kDa chaperonin from Streptococcus pyogenes serotype M18 (strain MGAS8232).